Consider the following 367-residue polypeptide: Methylthioribose-1-phosphate isomerase (367 aa).

Substrate contacts are provided by residues 48–50, R91, and Q215; that span reads RGA. The Proton donor role is filled by D256. Position 266-267 (266-267) interacts with substrate; the sequence is NK.

The protein belongs to the eIF-2B alpha/beta/delta subunits family. MtnA subfamily.

The enzyme catalyses 5-(methylsulfanyl)-alpha-D-ribose 1-phosphate = 5-(methylsulfanyl)-D-ribulose 1-phosphate. It participates in amino-acid biosynthesis; L-methionine biosynthesis via salvage pathway; L-methionine from S-methyl-5-thio-alpha-D-ribose 1-phosphate: step 1/6. Functionally, catalyzes the interconversion of methylthioribose-1-phosphate (MTR-1-P) into methylthioribulose-1-phosphate (MTRu-1-P). The polypeptide is Methylthioribose-1-phosphate isomerase (Syntrophus aciditrophicus (strain SB)).